The sequence spans 289 residues: Rhodopsin (289 aa).

Residues 1–7 (YLVSPAA) are Extracellular-facing. The helical transmembrane segment at 8–32 (YAALGAYMFLLILVGFPVNFLTLYV) threads the bilayer. The Cytoplasmic portion of the chain corresponds to 33–44 (TLDHKKLRTPLN). A helical membrane pass occupies residues 45–67 (YILLNLAVADLFMVLGGFTTTMY). Over 68-81 (TSMHGYFVLGRLGC) the chain is Extracellular. Cysteine 81 and cysteine 158 form a disulfide bridge. Residues 82–104 (NLEGFFATLGGEIALWSLVVLAI) traverse the membrane as a helical segment. The 'Ionic lock' involved in activated form stabilization signature appears at 105–107 (ERW). Residues 105–123 (ERWIVVCKPISNFRFTEDH) are Cytoplasmic-facing. Residues 124 to 144 (AIMGLAFSWVMALTCAVPPLV) traverse the membrane as a helical segment. Topologically, residues 145 to 173 (GWSRYIPEGMQCSCGVDYYTRAEGFNTES) are extracellular. A helical membrane pass occupies residues 174–195 (FVLYMFTVHFLIPLSVIFFCYG). At 196–223 (RLLCAVKEAAAAQQESETTQRAEKEVSR) the chain is on the cytoplasmic side. Residues 224–245 (MVVLMVIGFLVCWLPYASVAWW) traverse the membrane as a helical segment. The Extracellular portion of the chain corresponds to 246–257 (IFCNQGSEFGPI). Residues 258–279 (FMTLPAFFAKTSAIYNPLIYIC) form a helical membrane-spanning segment. Lysine 267 carries the post-translational modification N6-(retinylidene)lysine. The Cytoplasmic portion of the chain corresponds to 280–289 (MNKQFRHCMI).

The protein belongs to the G-protein coupled receptor 1 family. Opsin subfamily. Post-translationally, phosphorylated on some or all of the serine and threonine residues present in the C-terminal region. Contains one covalently linked retinal chromophore.

Its subcellular location is the membrane. It is found in the cell projection. The protein resides in the cilium. The protein localises to the photoreceptor outer segment. Photoreceptor required for image-forming vision at low light intensity. While most salt water fish species use retinal as chromophore, most freshwater fish use 3-dehydroretinal, or a mixture of retinal and 3-dehydroretinal. Light-induced isomerization of 11-cis to all-trans retinal triggers a conformational change that activates signaling via G-proteins. Subsequent receptor phosphorylation mediates displacement of the bound G-protein alpha subunit by arrestin and terminates signaling. In Procottus jeittelesii (Red sculpin), this protein is Rhodopsin (rho).